The chain runs to 729 residues: MQLEKQLQHAQCTFPFSHLGLLKTDNAFTITAWVPNATGIKVIDLATDKAIGSLKRQAQSDLFTAEFTKGNPPAVYAFEVKNAQGSYRIIDPYQFQDQAFHAVHFVDHLPKNVYQQLGAQLIDLDVGLKTPIAATRFAVFAPNASAVSVIGDFNYWDGSCLPMQKTDFGYWVLVVPGVKAGDKYKYQIKDAHGNELPHKADPVGFYAEQYPSHASVVFDHEQYQWQDTKWQQQVKGDKYTQAMSIYEVHLGSWKRPDSQSGKTYLSYHELVDELIPYVKDMGYTHLELLPISEFPFDGSWGYQPVGLFAPTSRFGGPDDFKYFVDQCHQNGIGVIIDWVPAHFPEDGHGLARFDGTHVYEYEDPRKGWHPDWNSCIYDFGKDTVRQFLVANALFWLDKYHVDGLRVDAVASMLYLDYSREADEWVPNVDGGNHNYEAISLLQWMNKEVYSHYPNAMTIAEESTSFAKVSRPVFEGGLGFGFKWNMGWMHDSLHYISKDPSYRRYHHGEMTFSMVYAYDESFVLPISHDEVVHGKGSLLRKMPGDEWQQAANLRCYAAFMYAHPGKKLNFMGNEIGQSAEWNHDSSINWHLLDYDKHSGIQALYRDLNTLYAEYPALHELDHDPAGFEWIDHENAEQSTLAMLRQSKGGKQQVYALSNFTPVPRTNFRLGVKAPGEYSILLNTDDKQYWGSGHSQNKTIKADKTPWNNQAYSISVSLPPLATVFILYKGQ.

Residue Asp407 is the Nucleophile of the active site. The Proton donor role is filled by Glu460.

Belongs to the glycosyl hydrolase 13 family. GlgB subfamily. In terms of assembly, monomer.

The enzyme catalyses Transfers a segment of a (1-&gt;4)-alpha-D-glucan chain to a primary hydroxy group in a similar glucan chain.. It functions in the pathway glycan biosynthesis; glycogen biosynthesis. Functionally, catalyzes the formation of the alpha-1,6-glucosidic linkages in glycogen by scission of a 1,4-alpha-linked oligosaccharide from growing alpha-1,4-glucan chains and the subsequent attachment of the oligosaccharide to the alpha-1,6 position. In Pseudoalteromonas atlantica (strain T6c / ATCC BAA-1087), this protein is 1,4-alpha-glucan branching enzyme GlgB.